The primary structure comprises 102 residues: ATP-dependent Clp protease adapter protein ClpS (102 aa).

Basic and acidic residues predominate over residues 1 to 18; that stretch reads MSQFDHQHLSDTEEKQEL. The segment at 1–21 is disordered; it reads MSQFDHQHLSDTEEKQELKPP.

Belongs to the ClpS family. Binds to the N-terminal domain of the chaperone ClpA.

Its function is as follows. Involved in the modulation of the specificity of the ClpAP-mediated ATP-dependent protein degradation. This Idiomarina loihiensis (strain ATCC BAA-735 / DSM 15497 / L2-TR) protein is ATP-dependent Clp protease adapter protein ClpS.